A 160-amino-acid chain; its full sequence is MSGQVTLQSSDQVNITVERAVAERSMLIKNLLEDLGESEEPVPIPNVNESVLKKVIEWCTHHKNDPQTTGEEDDNRRRTTEIDEWDQKFMQVDQEMLFEIILAANYLDIKALLDVGCKTVANMIKGKSPEEIRKTFNIQNDFTPEEEDQIRRENEWAEDR.

An interaction with the F-box domain of F-box proteins region spans residues 101–160 (ILAANYLDIKALLDVGCKTVANMIKGKSPEEIRKTFNIQNDFTPEEEDQIRRENEWAEDR).

This sequence belongs to the SKP1 family. As to quaternary structure, component of the SCF (SKP1-CUL1-F-box protein) E3 ubiquitin ligase complexes.

Its pathway is protein modification; protein ubiquitination. Essential component of the SCF (SKP1-CUL1-F-box protein) E3 ubiquitin ligase complexes, which mediate the ubiquitination and subsequent proteasomal degradation of target proteins. Controls sulfur metabolite repression, probably by mediating the inactivation or degradation of the metR transcription factor. The polypeptide is E3 ubiquitin ligase complex SCF subunit sconC (sconC) (Talaromyces stipitatus (strain ATCC 10500 / CBS 375.48 / QM 6759 / NRRL 1006) (Penicillium stipitatum)).